A 500-amino-acid chain; its full sequence is Cobyric acid synthase (500 aa).

The GATase cobBQ-type domain occupies 251–449 (KLNIVIPIMP…LHGVFDHPDA (199 aa)). Cys-332 (nucleophile) is an active-site residue. His-441 is an active-site residue.

This sequence belongs to the CobB/CobQ family. CobQ subfamily.

Its pathway is cofactor biosynthesis; adenosylcobalamin biosynthesis. Its function is as follows. Catalyzes amidations at positions B, D, E, and G on adenosylcobyrinic A,C-diamide. NH(2) groups are provided by glutamine, and one molecule of ATP is hydrogenolyzed for each amidation. This Marinomonas sp. (strain MWYL1) protein is Cobyric acid synthase.